A 308-amino-acid chain; its full sequence is Putative mitochondrial transporter UCP3 (308 aa).

The Mitochondrial intermembrane segment spans residues 1–10 (MVGLQPSEVP). A helical transmembrane segment spans residues 11–32 (PTTVVKFLGAGTAACFADLLTF). 3 Solcar repeats span residues 11–102 (PTTV…VKQF), 111–202 (SSVA…IKEK), and 211–296 (DNFP…LKRA). Residues 33 to 73 (PLDTAKVRLQIQGENPGAQSVQYRGVLGTILTMVRTEGPRS) lie on the Mitochondrial matrix side of the membrane. Residues 74–96 (PYSGLVAGLHRQMSFASIRIGLY) form a helical membrane-spanning segment. At 97–116 (DSVKQFYTPKGADHSSVAIR) the chain is on the mitochondrial intermembrane side. The helical transmembrane segment at 117–133 (ILAGCTTGAMAVTCAQP) threads the bilayer. Topologically, residues 134–179 (TDVVKVRFQAMIRLGTGGERKYRGTMDAYRTIAREEGVRGLWKGTW) are mitochondrial matrix. Residues 180–196 (PNITRNAIVNCAEMVTY) traverse the membrane as a helical segment. The Mitochondrial intermembrane portion of the chain corresponds to 197–213 (DIIKEKLLESHLFTDNF). Residues 214–233 (PCHFVSAFGAGFCATVVASP) traverse the membrane as a helical segment. The Mitochondrial matrix segment spans residues 234-267 (VDVVKTRYMNAPLGRYRSPLHCMLKMVAQEGPTA). Residues 268-290 (FYKGFVPSFLRLGAWNVMMFVTY) form a helical membrane-spanning segment. The interval 275–297 (SFLRLGAWNVMMFVTYEQLKRAL) is purine nucleotide binding. Residues 291 to 308 (EQLKRALMKVQVLRESPF) lie on the Mitochondrial intermembrane side of the membrane.

Belongs to the mitochondrial carrier (TC 2.A.29) family. As to quaternary structure, interacts with HAX1; the interaction is direct and calcium-dependent.

It localises to the mitochondrion inner membrane. Inhibited by purine nucleotides and inorganic phosphate (in vitro). Functionally, putative transmembrane transporter that plays a role in mitochondrial metabolism via an as yet unclear mechanism. Originally, this mitochondrial protein was thought to act as a proton transmembrane transporter from the mitochondrial intermembrane space into the matrix, causing proton leaks through the inner mitochondrial membrane, thereby uncoupling mitochondrial membrane potential generation from ATP synthesis. However, this function is controversial and uncoupling may not be the function, or at least not the main function, but rather a consequence of more conventional metabolite transporter activity. The sequence is that of Putative mitochondrial transporter UCP3 from Mus musculus (Mouse).